A 318-amino-acid polypeptide reads, in one-letter code: Transaldolase (318 aa).

The active-site Schiff-base intermediate with substrate is Lys132.

It belongs to the transaldolase family. Type 1 subfamily. Homodimer.

It localises to the cytoplasm. The enzyme catalyses D-sedoheptulose 7-phosphate + D-glyceraldehyde 3-phosphate = D-erythrose 4-phosphate + beta-D-fructose 6-phosphate. The protein operates within carbohydrate degradation; pentose phosphate pathway; D-glyceraldehyde 3-phosphate and beta-D-fructose 6-phosphate from D-ribose 5-phosphate and D-xylulose 5-phosphate (non-oxidative stage): step 2/3. Transaldolase is important for the balance of metabolites in the pentose-phosphate pathway. The chain is Transaldolase from Shewanella piezotolerans (strain WP3 / JCM 13877).